Consider the following 121-residue polypeptide: Ribosome-binding factor A (121 aa).

The protein belongs to the RbfA family. Monomer. Binds 30S ribosomal subunits, but not 50S ribosomal subunits or 70S ribosomes.

It localises to the cytoplasm. Its function is as follows. One of several proteins that assist in the late maturation steps of the functional core of the 30S ribosomal subunit. Associates with free 30S ribosomal subunits (but not with 30S subunits that are part of 70S ribosomes or polysomes). Required for efficient processing of 16S rRNA. May interact with the 5'-terminal helix region of 16S rRNA. The protein is Ribosome-binding factor A of Clostridium acetobutylicum (strain ATCC 824 / DSM 792 / JCM 1419 / IAM 19013 / LMG 5710 / NBRC 13948 / NRRL B-527 / VKM B-1787 / 2291 / W).